A 138-amino-acid polypeptide reads, in one-letter code: Abscisic stress-ripening protein 5 (138 aa).

The span at 1–13 (MAEEKHHHHLFHH) shows a compositional bias: basic residues. Disordered stretches follow at residues 1-27 (MAEE…DSYG) and 106-138 (GAGG…HLFG).

It belongs to the abscisic acid and water stress-induced protein family.

Its subcellular location is the nucleus. It localises to the cytoplasm. Involved in tolerance to aluminum. Regulates the expression of different genes that collectively contribute to the protection of the cell in response to aluminum stress. The sequence is that of Abscisic stress-ripening protein 5 from Oryza sativa subsp. indica (Rice).